The sequence spans 185 residues: Ribosome-recycling factor (185 aa).

This sequence belongs to the RRF family.

It localises to the cytoplasm. Its function is as follows. Responsible for the release of ribosomes from messenger RNA at the termination of protein biosynthesis. May increase the efficiency of translation by recycling ribosomes from one round of translation to another. This chain is Ribosome-recycling factor, found in Vesicomyosocius okutanii subsp. Calyptogena okutanii (strain HA).